An 88-amino-acid chain; its full sequence is Cytochrome c oxidase subunit 6B2 (88 aa).

The disordered stretch occupies residues methionine 1–arginine 22. Residues isoleucine 29–tryptophan 75 form the CHCH domain. The Cx9C motif signature appears at cysteine 32–cysteine 42. Intrachain disulfides connect cysteine 32–cysteine 67 and cysteine 42–cysteine 56. Residues cysteine 56–cysteine 67 carry the Cx10C motif motif.

The protein belongs to the cytochrome c oxidase subunit 6B family. Component of the cytochrome c oxidase (complex IV, CIV), a multisubunit enzyme composed of 14 subunits. The complex is composed of a catalytic core of 3 subunits MT-CO1, MT-CO2 and MT-CO3, encoded in the mitochondrial DNA, and 11 supernumerary subunits COX4I1 (or COX4I2), COX5A, COX5B, COX6A1 (or COX6A2), COX6B1 (or COX6B2), COX6C, COX7A2 (or COX7A1), COX7B, COX7C, COX8A and NDUFA4, which are encoded in the nuclear genome. The complex exists as a monomer or a dimer and forms supercomplexes (SCs) in the inner mitochondrial membrane with NADH-ubiquinone oxidoreductase (complex I, CI) and ubiquinol-cytochrome c oxidoreductase (cytochrome b-c1 complex, complex III, CIII), resulting in different assemblies (supercomplex SCI(1)III(2)IV(1) and megacomplex MCI(2)III(2)IV(2)). As to expression, testis specific. Weak expression in thymus and heart. Expressed in cancer cell lines.

The protein localises to the mitochondrion inner membrane. It participates in energy metabolism; oxidative phosphorylation. Component of the cytochrome c oxidase, the last enzyme in the mitochondrial electron transport chain which drives oxidative phosphorylation. The respiratory chain contains 3 multisubunit complexes succinate dehydrogenase (complex II, CII), ubiquinol-cytochrome c oxidoreductase (cytochrome b-c1 complex, complex III, CIII) and cytochrome c oxidase (complex IV, CIV), that cooperate to transfer electrons derived from NADH and succinate to molecular oxygen, creating an electrochemical gradient over the inner membrane that drives transmembrane transport and the ATP synthase. Cytochrome c oxidase is the component of the respiratory chain that catalyzes the reduction of oxygen to water. Electrons originating from reduced cytochrome c in the intermembrane space (IMS) are transferred via the dinuclear copper A center (CU(A)) of subunit 2 and heme A of subunit 1 to the active site in subunit 1, a binuclear center (BNC) formed by heme A3 and copper B (CU(B)). The BNC reduces molecular oxygen to 2 water molecules using 4 electrons from cytochrome c in the IMS and 4 protons from the mitochondrial matrix. This Homo sapiens (Human) protein is Cytochrome c oxidase subunit 6B2 (COX6B2).